The chain runs to 337 residues: Phosphate acyltransferase (337 aa).

The protein belongs to the PlsX family. As to quaternary structure, homodimer. Probably interacts with PlsY.

It is found in the cytoplasm. It catalyses the reaction a fatty acyl-[ACP] + phosphate = an acyl phosphate + holo-[ACP]. It participates in lipid metabolism; phospholipid metabolism. Catalyzes the reversible formation of acyl-phosphate (acyl-PO(4)) from acyl-[acyl-carrier-protein] (acyl-ACP). This enzyme utilizes acyl-ACP as fatty acyl donor, but not acyl-CoA. The polypeptide is Phosphate acyltransferase (Latilactobacillus sakei subsp. sakei (strain 23K) (Lactobacillus sakei subsp. sakei)).